The following is a 110-amino-acid chain: Phosphoribosyl-AMP cyclohydrolase (110 aa).

D80 serves as a coordination point for Mg(2+). Position 81 (C81) interacts with Zn(2+). Mg(2+) contacts are provided by D82 and D84. Zn(2+) is bound by residues C97 and C104.

The protein belongs to the PRA-CH family. As to quaternary structure, homodimer. It depends on Mg(2+) as a cofactor. Zn(2+) serves as cofactor.

The protein resides in the cytoplasm. The catalysed reaction is 1-(5-phospho-beta-D-ribosyl)-5'-AMP + H2O = 1-(5-phospho-beta-D-ribosyl)-5-[(5-phospho-beta-D-ribosylamino)methylideneamino]imidazole-4-carboxamide. It functions in the pathway amino-acid biosynthesis; L-histidine biosynthesis; L-histidine from 5-phospho-alpha-D-ribose 1-diphosphate: step 3/9. Functionally, catalyzes the hydrolysis of the adenine ring of phosphoribosyl-AMP. The chain is Phosphoribosyl-AMP cyclohydrolase from Clostridium botulinum (strain Okra / Type B1).